A 249-amino-acid chain; its full sequence is Methylthioribulose-1-phosphate dehydratase (249 aa).

A substrate-binding site is contributed by Cys102. The Zn(2+) site is built by His120 and His122. The Proton donor/acceptor role is filled by Glu148. His205 is a binding site for Zn(2+).

The protein belongs to the aldolase class II family. MtnB subfamily. It depends on Zn(2+) as a cofactor.

Its subcellular location is the cytoplasm. It carries out the reaction 5-(methylsulfanyl)-D-ribulose 1-phosphate = 5-methylsulfanyl-2,3-dioxopentyl phosphate + H2O. It functions in the pathway amino-acid biosynthesis; L-methionine biosynthesis via salvage pathway; L-methionine from S-methyl-5-thio-alpha-D-ribose 1-phosphate: step 2/6. Catalyzes the dehydration of methylthioribulose-1-phosphate (MTRu-1-P) into 2,3-diketo-5-methylthiopentyl-1-phosphate (DK-MTP-1-P). The polypeptide is Methylthioribulose-1-phosphate dehydratase (Botryotinia fuckeliana (strain B05.10) (Noble rot fungus)).